Here is a 210-residue protein sequence, read N- to C-terminus: Thymidylate kinase (210 aa).

ATP is bound at residue 10 to 17 (GLEGAGKT).

The protein belongs to the thymidylate kinase family.

The catalysed reaction is dTMP + ATP = dTDP + ADP. Its function is as follows. Phosphorylation of dTMP to form dTDP in both de novo and salvage pathways of dTTP synthesis. The sequence is that of Thymidylate kinase from Actinobacillus succinogenes (strain ATCC 55618 / DSM 22257 / CCUG 43843 / 130Z).